The following is a 116-amino-acid chain: Ribosome-binding factor A (116 aa).

Belongs to the RbfA family. Monomer. Binds 30S ribosomal subunits, but not 50S ribosomal subunits or 70S ribosomes.

It is found in the cytoplasm. Its function is as follows. One of several proteins that assist in the late maturation steps of the functional core of the 30S ribosomal subunit. Associates with free 30S ribosomal subunits (but not with 30S subunits that are part of 70S ribosomes or polysomes). Required for efficient processing of 16S rRNA. May interact with the 5'-terminal helix region of 16S rRNA. In Malacoplasma penetrans (strain HF-2) (Mycoplasma penetrans), this protein is Ribosome-binding factor A.